A 1325-amino-acid chain; its full sequence is uncharacterized protein (1325 aa).

The first 18 residues, 1 to 18, serve as a signal peptide directing secretion; that stretch reads MNRIYRVIWNCTLQVFQA. The N-palmitoyl cysteine moiety is linked to residue C19. The S-diacylglycerol cysteine moiety is linked to residue C19.

The protein to E.coli YfaL.

It is found in the cell membrane. This is an uncharacterized protein from Escherichia coli (strain K12).